Reading from the N-terminus, the 78-residue chain is Delta-conotoxin TxVIA (78 aa).

Residues 1-22 (MKLTCMMIVAVLFLTAWTFATA) form the signal peptide. A propeptide spanning residues 23–49 (DDPRNGLGNLFSNAHHEMKNPEASKLN) is cleaved from the precursor. 3 cysteine pairs are disulfide-bonded: cysteine 53-cysteine 68, cysteine 60-cysteine 72, and cysteine 67-cysteine 77. Methionine sulfoxide; partial is present on methionine 59.

This sequence belongs to the conotoxin O1 superfamily. Expressed by the venom duct.

Its subcellular location is the secreted. Delta-conotoxins bind to site 6 of voltage-gated sodium channels (Nav) and inhibit the inactivation process. Binding of this toxin is strongly calcium-dependent but not voltage-dependent. The binding site is most likely on the extracellular side of the sodium channel. Binds receptor sites on both mollusk and rat central nervous system, but despite its high affinity binding to rat sodium channel, it has no functional effect in vivo and in vitro on it. Also has no effect on Gambusia fish. Is important in mollusk for the paralysis of the prey. Upon injection of the peptide, a subordinate lobster assumes an exaggerated dominant posture (of a 'King-Kong' lobster!). The polypeptide is Delta-conotoxin TxVIA (Conus textile (Cloth-of-gold cone)).